Here is a 628-residue protein sequence, read N- to C-terminus: Probable alpha-L-arabinofuranosidase A (628 aa).

The signal sequence occupies residues Met-1–Gly-25. 9 N-linked (GlcNAc...) asparagine glycosylation sites follow: Asn-36, Asn-51, Asn-74, Asn-152, Asn-164, Asn-260, Asn-359, Asn-404, and Asn-493.

Belongs to the glycosyl hydrolase 51 family.

The protein resides in the secreted. The enzyme catalyses Hydrolysis of terminal non-reducing alpha-L-arabinofuranoside residues in alpha-L-arabinosides.. It participates in glycan metabolism; L-arabinan degradation. Its function is as follows. Alpha-L-arabinofuranosidase involved in the degradation of arabinoxylan, a major component of plant hemicellulose. Acts only on small linear 1,5-alpha-linked L-arabinofuranosyl oligosaccharides. This Aspergillus terreus (strain NIH 2624 / FGSC A1156) protein is Probable alpha-L-arabinofuranosidase A (abfA).